A 258-amino-acid polypeptide reads, in one-letter code: Enterotoxin type G (258 aa).

The first 25 residues, 1–25 (MKKLSTVIIILILEIVFHNMNYVNA), serve as a signal peptide directing secretion. The cysteines at positions 116 and 133 are disulfide-linked.

This sequence belongs to the staphylococcal/streptococcal toxin family.

Its subcellular location is the secreted. Its function is as follows. Staphylococcal enterotoxins cause the intoxication staphylococcal food poisoning syndrome. The illness is characterized by high fever, hypotension, diarrhea, shock, and in some cases death. This Staphylococcus aureus (strain N315) protein is Enterotoxin type G (entG).